Here is a 323-residue protein sequence, read N- to C-terminus: GDSL esterase/lipase At5g03980 (323 aa).

The N-terminal stretch at 1–21 is a signal peptide; it reads MSTTKALSLLVFILFVSLVHS. Ser-36 (nucleophile) is an active-site residue. The N-linked (GlcNAc...) asparagine glycan is linked to Asn-77. Residues Asp-294 and His-297 contribute to the active site.

The protein belongs to the 'GDSL' lipolytic enzyme family.

It localises to the secreted. This is GDSL esterase/lipase At5g03980 from Arabidopsis thaliana (Mouse-ear cress).